We begin with the raw amino-acid sequence, 253 residues long: Ribonuclease HII (253 aa).

One can recognise an RNase H type-2 domain in the interval 70 to 253 (PLVAGIDEVG…RSFSPVQNAL (184 aa)). The a divalent metal cation site is built by Asp-76, Glu-77, and Asp-168.

It belongs to the RNase HII family. Requires Mn(2+) as cofactor. Mg(2+) is required as a cofactor.

It is found in the cytoplasm. It carries out the reaction Endonucleolytic cleavage to 5'-phosphomonoester.. Functionally, endonuclease that specifically degrades the RNA of RNA-DNA hybrids. The polypeptide is Ribonuclease HII (Latilactobacillus sakei subsp. sakei (strain 23K) (Lactobacillus sakei subsp. sakei)).